Consider the following 361-residue polypeptide: Peptide chain release factor 1 (361 aa).

The residue at position 240 (Gln240) is an N5-methylglutamine.

Belongs to the prokaryotic/mitochondrial release factor family. Methylated by PrmC. Methylation increases the termination efficiency of RF1.

Its subcellular location is the cytoplasm. Functionally, peptide chain release factor 1 directs the termination of translation in response to the peptide chain termination codons UAG and UAA. The chain is Peptide chain release factor 1 from Mycobacterium leprae (strain Br4923).